The following is a 611-amino-acid chain: Poly(3-hydroxyalkanoate) polymerase subunit PhaC (611 aa).

Cys349 is an active-site residue.

Belongs to the PHA/PHB synthase family. Type I PhaC subfamily. As to quaternary structure, monomer.

It is found in the cytoplasm. The catalysed reaction is (3R)-3-hydroxybutanoyl-CoA + [(3R)-hydroxybutanoate](n) = [(3R)-hydroxybutanoate](n+1) + CoA. It functions in the pathway biopolymer metabolism; poly-(R)-3-hydroxybutanoate biosynthesis. In terms of biological role, polymerizes D(-)-3-hydroxybutyryl-CoA to create PHB which consists of thousands of hydroxybutyrate molecules linked end to end. PHB serves as an intracellular energy reserve material when cells grow under conditions of nutrient limitation. In Rhizobium meliloti (strain 1021) (Ensifer meliloti), this protein is Poly(3-hydroxyalkanoate) polymerase subunit PhaC.